A 152-amino-acid chain; its full sequence is Ribonuclease HI (152 aa).

The RNase H type-1 domain maps to 1 to 142 (MDSKVVIYTD…ADKLAVQGRE (142 aa)). The Mg(2+) site is built by D10, E48, D70, and D134.

This sequence belongs to the RNase H family. In terms of assembly, monomer. Mg(2+) serves as cofactor.

It is found in the cytoplasm. It catalyses the reaction Endonucleolytic cleavage to 5'-phosphomonoester.. Its function is as follows. Endonuclease that specifically degrades the RNA of RNA-DNA hybrids. The chain is Ribonuclease HI (rnhA) from Rickettsia prowazekii (strain Madrid E).